The following is a 614-amino-acid chain: tRNA uridine 5-carboxymethylaminomethyl modification enzyme MnmG (614 aa).

Residue 10-15 (GAGHAG) participates in FAD binding. Residue 271–285 (GPRYCPSIEDKIVKF) participates in NAD(+) binding.

The protein belongs to the MnmG family. Homodimer. Heterotetramer of two MnmE and two MnmG subunits. FAD is required as a cofactor.

Its subcellular location is the cytoplasm. In terms of biological role, NAD-binding protein involved in the addition of a carboxymethylaminomethyl (cmnm) group at the wobble position (U34) of certain tRNAs, forming tRNA-cmnm(5)s(2)U34. In Ureaplasma urealyticum serovar 10 (strain ATCC 33699 / Western), this protein is tRNA uridine 5-carboxymethylaminomethyl modification enzyme MnmG.